Consider the following 218-residue polypeptide: Adenylate kinase (218 aa).

Residue 10 to 15 (GAGKGT) coordinates ATP. Positions 30–59 (STGDMLRAAVKAGTPLGQQAKAVMDAGQLV) are NMP. AMP is bound by residues Thr31, Arg36, 57–59 (QLV), 85–88 (GFPR), and Gln92. Residues 122–159 (GRRSHPASGRTYHVKFNPPKVEGQDDVTGEPLVQREDD) are LID. Residues Arg123 and 132–133 (TY) each bind ATP. The disordered stretch occupies residues 127 to 151 (PASGRTYHVKFNPPKVEGQDDVTGE). AMP-binding residues include Arg156 and Arg167. An ATP-binding site is contributed by Gly203.

The protein belongs to the adenylate kinase family. As to quaternary structure, monomer.

Its subcellular location is the cytoplasm. The enzyme catalyses AMP + ATP = 2 ADP. It participates in purine metabolism; AMP biosynthesis via salvage pathway; AMP from ADP: step 1/1. Functionally, catalyzes the reversible transfer of the terminal phosphate group between ATP and AMP. Plays an important role in cellular energy homeostasis and in adenine nucleotide metabolism. In Delftia acidovorans (strain DSM 14801 / SPH-1), this protein is Adenylate kinase.